We begin with the raw amino-acid sequence, 51 residues long: Large ribosomal subunit protein eL39 (51 aa).

The protein belongs to the eukaryotic ribosomal protein eL39 family.

The protein is Large ribosomal subunit protein eL39 of Thermococcus onnurineus (strain NA1).